The primary structure comprises 191 residues: Small ribosomal subunit protein uS10c (191 aa).

The transit peptide at 1–56 (MAVSTVSSFLLPSFGIPSSSPSSTRLKVSLLPSSSTHGGLSSCVLTKPSVSLTKVF) directs the protein to the chloroplast.

This sequence belongs to the universal ribosomal protein uS10 family. Part of the 30S ribosomal subunit.

It is found in the plastid. It localises to the chloroplast. The chain is Small ribosomal subunit protein uS10c (RPS10) from Arabidopsis thaliana (Mouse-ear cress).